Here is a 198-residue protein sequence, read N- to C-terminus: uncharacterized protein (198 aa).

Positions 40 to 111 (GSALPPQAPT…LSRGAGQGAP (72 aa)) are disordered. Over residues 60–74 (SSRTPGPRPPRSTLR) the composition is skewed to low complexity.

This is an uncharacterized protein from Homo sapiens (Human).